A 449-amino-acid polypeptide reads, in one-letter code: MTSSVWQERRHGEDKQRRNDHRSPYQRDRARILHSAAFRRLQAKTQVLGVGMNDFYRTRLTHSLEVSQIGTGIAAQLRRKYPQHKQLLCSMSLLESLCLAHDIGHPPFGHGGEVALNYMMRDHGGFEGNGQTFRILSKLEPYTLDFGMNLCRRTMLGILKYPAPHSKLFVAGEHNEITNHRQLKPSQWPPVKGIFDDDNDIFAWVLEPLSEADRSRFTSPQQGSHPALHHYPHLRTQFKSFDCSIMELADDIAYAVHDLEDAIVMGIVTASQWHQDVAPTLTNSGDTWIRQELADIGNKLFSHEHHLRKDAIGTLVNGFVTAIVISEDDVFEEPLLRFNATLEPEFAIALNVLKQLVYKYVIRKPEIQMLEYKGQQIVMGLFEAFASDPERLLPLNTQERWRESEQQGLNSHRVLADYISGMTDEFAGRLYQQLFSPKAGSNVELSKEM.

Positions 1–27 (MTSSVWQERRHGEDKQRRNDHRSPYQR) are disordered. Basic and acidic residues predominate over residues 7–27 (QERRHGEDKQRRNDHRSPYQR). An HD domain is found at 59 to 255 (RLTHSLEVSQ…MELADDIAYA (197 aa)).

It belongs to the dGTPase family. Type 2 subfamily.

This Shewanella baltica (strain OS195) protein is Deoxyguanosinetriphosphate triphosphohydrolase-like protein.